A 493-amino-acid chain; its full sequence is Serine/threonine-protein kinase chk-1 (493 aa).

In terms of domain architecture, Protein kinase spans 26-286 (YRVIRTLGEG…IEQIKTDPWF (261 aa)). ATP contacts are provided by residues 32 to 40 (LGEGAFGEV) and Lys56. The Proton acceptor role is filled by Asp150. Positions 308–348 (DENSPDCNISSTQQADAVSTAKRRHLETPDKVAHVERQNAS) are disordered. The segment covering 312-324 (PDCNISSTQQADA) has biased composition (polar residues). Over residues 333–344 (LETPDKVAHVER) the composition is skewed to basic and acidic residues.

This sequence belongs to the protein kinase superfamily. CAMK Ser/Thr protein kinase family. NIM1 subfamily.

It localises to the cytoplasm. The protein resides in the nucleus. The catalysed reaction is L-seryl-[protein] + ATP = O-phospho-L-seryl-[protein] + ADP + H(+). It catalyses the reaction L-threonyl-[protein] + ATP = O-phospho-L-threonyl-[protein] + ADP + H(+). In terms of biological role, serine/threonine-protein kinase which is required for checkpoint-mediated cell cycle arrest and activation of DNA repair in response to the presence of DNA damage or unreplicated DNA. May also negatively regulate cell cycle progression during unperturbed cell cycles. Required for checkpoint mediated cell cycle arrest in response to DNA damage in germline cells. Essential for embryogenesis. The protein is Serine/threonine-protein kinase chk-1 (chk-1) of Caenorhabditis briggsae.